The chain runs to 432 residues: Phosphomethylpyrimidine synthase (432 aa).

Residues asparagine 66, methionine 95, tyrosine 124, histidine 163, 185–187, 226–229, and glutamate 265 contribute to the substrate site; these read SRG and DGLR. Histidine 269 serves as a coordination point for Zn(2+). Residue tyrosine 292 participates in substrate binding. A Zn(2+)-binding site is contributed by histidine 333. [4Fe-4S] cluster is bound by residues cysteine 409, cysteine 412, and cysteine 416.

The protein belongs to the ThiC family. It depends on [4Fe-4S] cluster as a cofactor.

It catalyses the reaction 5-amino-1-(5-phospho-beta-D-ribosyl)imidazole + S-adenosyl-L-methionine = 4-amino-2-methyl-5-(phosphooxymethyl)pyrimidine + CO + 5'-deoxyadenosine + formate + L-methionine + 3 H(+). It functions in the pathway cofactor biosynthesis; thiamine diphosphate biosynthesis. Its function is as follows. Catalyzes the synthesis of the hydroxymethylpyrimidine phosphate (HMP-P) moiety of thiamine from aminoimidazole ribotide (AIR) in a radical S-adenosyl-L-methionine (SAM)-dependent reaction. This chain is Phosphomethylpyrimidine synthase, found in Caldanaerobacter subterraneus subsp. tengcongensis (strain DSM 15242 / JCM 11007 / NBRC 100824 / MB4) (Thermoanaerobacter tengcongensis).